Here is a 155-residue protein sequence, read N- to C-terminus: 3-dehydroquinate dehydratase (155 aa).

Catalysis depends on Tyr31, which acts as the Proton acceptor. Positions 83, 89, and 96 each coordinate substrate. The active-site Proton donor is the His109. Residues Leu110–Ser111 and Arg120 each bind substrate.

The protein belongs to the type-II 3-dehydroquinase family. As to quaternary structure, homododecamer.

It carries out the reaction 3-dehydroquinate = 3-dehydroshikimate + H2O. It functions in the pathway metabolic intermediate biosynthesis; chorismate biosynthesis; chorismate from D-erythrose 4-phosphate and phosphoenolpyruvate: step 3/7. Catalyzes a trans-dehydration via an enolate intermediate. This is 3-dehydroquinate dehydratase from Laribacter hongkongensis (strain HLHK9).